The primary structure comprises 755 residues: Polyribonucleotide nucleotidyltransferase (755 aa).

The Mg(2+) site is built by D545 and D551. One can recognise a KH domain in the interval 611 to 670 (PRITAITVPVNKIGEVIGPKGKTINSITEETGANISIEEDGTVYVSAASGAAAEAAIEKI). The 70-residue stretch at 682-751 (GERFLGTVVK…NRGKISLAPV (70 aa)) folds into the S1 motif domain.

The protein belongs to the polyribonucleotide nucleotidyltransferase family. The cofactor is Mg(2+).

The protein resides in the cytoplasm. The catalysed reaction is RNA(n+1) + phosphate = RNA(n) + a ribonucleoside 5'-diphosphate. In terms of biological role, involved in mRNA degradation. Catalyzes the phosphorolysis of single-stranded polyribonucleotides processively in the 3'- to 5'-direction. In Corynebacterium diphtheriae (strain ATCC 700971 / NCTC 13129 / Biotype gravis), this protein is Polyribonucleotide nucleotidyltransferase.